A 384-amino-acid polypeptide reads, in one-letter code: 1-deoxy-D-xylulose 5-phosphate reductoisomerase (384 aa).

NADPH-binding residues include threonine 10, glycine 11, serine 12, isoleucine 13, glycine 36, and asparagine 123. Lysine 124 provides a ligand contact to 1-deoxy-D-xylulose 5-phosphate. Glutamate 125 is an NADPH binding site. Aspartate 149 contributes to the Mn(2+) binding site. 1-deoxy-D-xylulose 5-phosphate-binding residues include serine 150, glutamate 151, serine 175, and histidine 198. Glutamate 151 provides a ligand contact to Mn(2+). Glycine 204 provides a ligand contact to NADPH. Serine 211, asparagine 216, lysine 217, and glutamate 220 together coordinate 1-deoxy-D-xylulose 5-phosphate. Mn(2+) is bound at residue glutamate 220.

The protein belongs to the DXR family. Mg(2+) serves as cofactor. It depends on Mn(2+) as a cofactor.

The catalysed reaction is 2-C-methyl-D-erythritol 4-phosphate + NADP(+) = 1-deoxy-D-xylulose 5-phosphate + NADPH + H(+). It functions in the pathway isoprenoid biosynthesis; isopentenyl diphosphate biosynthesis via DXP pathway; isopentenyl diphosphate from 1-deoxy-D-xylulose 5-phosphate: step 1/6. Catalyzes the NADPH-dependent rearrangement and reduction of 1-deoxy-D-xylulose-5-phosphate (DXP) to 2-C-methyl-D-erythritol 4-phosphate (MEP). The protein is 1-deoxy-D-xylulose 5-phosphate reductoisomerase of Chlorobium phaeovibrioides (strain DSM 265 / 1930) (Prosthecochloris vibrioformis (strain DSM 265)).